We begin with the raw amino-acid sequence, 249 residues long: ATP-dependent dethiobiotin synthetase BioD (249 aa).

Residue 11 to 16 participates in ATP binding; that stretch reads NVGKTI. Position 15 (Thr-15) interacts with Mg(2+). The active site involves Lys-31. Position 35 (Thr-35) interacts with substrate. ATP is bound by residues Asp-40, 127 to 130, 188 to 189, and 215 to 217; these read EGAG, NS, and PYL. Mg(2+) is bound by residues Asp-40 and Glu-127.

Belongs to the dethiobiotin synthetase family. In terms of assembly, homodimer. The cofactor is Mg(2+).

The protein localises to the cytoplasm. The catalysed reaction is (7R,8S)-7,8-diammoniononanoate + CO2 + ATP = (4R,5S)-dethiobiotin + ADP + phosphate + 3 H(+). Its pathway is cofactor biosynthesis; biotin biosynthesis; biotin from 7,8-diaminononanoate: step 1/2. Catalyzes a mechanistically unusual reaction, the ATP-dependent insertion of CO2 between the N7 and N8 nitrogen atoms of 7,8-diaminopelargonic acid (DAPA, also called 7,8-diammoniononanoate) to form a ureido ring. In Neorickettsia sennetsu (strain ATCC VR-367 / Miyayama) (Ehrlichia sennetsu), this protein is ATP-dependent dethiobiotin synthetase BioD.